We begin with the raw amino-acid sequence, 159 residues long: 6,7-dimethyl-8-ribityllumazine synthase (159 aa).

5-amino-6-(D-ribitylamino)uracil contacts are provided by residues Trp27, 62 to 64 (SWE), and 86 to 88 (VLI). 91–92 (ST) is a binding site for (2S)-2-hydroxy-3-oxobutyl phosphate. His94 serves as the catalytic Proton donor. A 5-amino-6-(D-ribitylamino)uracil-binding site is contributed by Leu119. Arg133 contributes to the (2S)-2-hydroxy-3-oxobutyl phosphate binding site.

Homopentamer.

The catalysed reaction is (2S)-2-hydroxy-3-oxobutyl phosphate + 5-amino-6-(D-ribitylamino)uracil = 6,7-dimethyl-8-(1-D-ribityl)lumazine + phosphate + 2 H2O + H(+). It participates in cofactor biosynthesis; riboflavin biosynthesis; riboflavin from 2-hydroxy-3-oxobutyl phosphate and 5-amino-6-(D-ribitylamino)uracil: step 1/2. With respect to regulation, competitively inhibited by riboflavin (Ki of 17 uM). Its function is as follows. Catalyzes the formation of 6,7-dimethyl-8-ribityllumazine by condensation of 5-amino-6-(D-ribitylamino)uracil with 3,4-dihydroxy-2-butanone 4-phosphate. This is the penultimate step in the biosynthesis of riboflavin. Also binds riboflavin with an unexpected high affinity. The chain is 6,7-dimethyl-8-ribityllumazine synthase (rib4) from Schizosaccharomyces pombe (strain 972 / ATCC 24843) (Fission yeast).